The sequence spans 263 residues: Probable ABC transporter permease protein ycf63 (263 aa).

5 helical membrane-spanning segments follow: residues 43–63 (IVGP…SMVF), 70–89 (EFLY…IAFT), 150–170 (ILSI…AFVM), 188–208 (ISDF…IGFI), and 230–250 (SVVT…YFMF).

It belongs to the MlaE permease family.

It is found in the plastid. The protein localises to the chloroplast membrane. Functionally, could be part of an ABC transporter complex. This chain is Probable ABC transporter permease protein ycf63 (ycf63), found in Pyropia yezoensis (Susabi-nori).